The chain runs to 883 residues: Phosphoenolpyruvate carboxylase (883 aa).

Active-site residues include His-138 and Lys-546.

This sequence belongs to the PEPCase type 1 family. It depends on Mg(2+) as a cofactor.

The catalysed reaction is oxaloacetate + phosphate = phosphoenolpyruvate + hydrogencarbonate. Forms oxaloacetate, a four-carbon dicarboxylic acid source for the tricarboxylic acid cycle. In Escherichia coli O45:K1 (strain S88 / ExPEC), this protein is Phosphoenolpyruvate carboxylase.